Reading from the N-terminus, the 92-residue chain is Small ribosomal subunit protein uS19c (92 aa).

The protein belongs to the universal ribosomal protein uS19 family.

It is found in the plastid. The protein resides in the chloroplast. Its function is as follows. Protein S19 forms a complex with S13 that binds strongly to the 16S ribosomal RNA. This Oltmannsiellopsis viridis (Marine flagellate) protein is Small ribosomal subunit protein uS19c.